A 277-amino-acid polypeptide reads, in one-letter code: Large ribosomal subunit protein uL2 (277 aa).

2 disordered regions span residues K32–G58 and V225–N277.

This sequence belongs to the universal ribosomal protein uL2 family. Part of the 50S ribosomal subunit. Forms a bridge to the 30S subunit in the 70S ribosome.

One of the primary rRNA binding proteins. Required for association of the 30S and 50S subunits to form the 70S ribosome, for tRNA binding and peptide bond formation. It has been suggested to have peptidyltransferase activity; this is somewhat controversial. Makes several contacts with the 16S rRNA in the 70S ribosome. This chain is Large ribosomal subunit protein uL2, found in Borrelia recurrentis (strain A1).